The following is a 751-amino-acid chain: MIPPAGSTPPGEALIPSVAPQDFWRSPISGYSGSVTRHISHRANNFKRHPKRRKYIRPSPPPPPNTPCPIELVDFEDLHPQRSFWELLFNGCILFGIEFSYAMETAYVTPVLLQMGLPDQLYSLVWFISPILGFLLQPLLGAWSDRCTSRFGRRRPFILVLAIGALLGLSLLLNGRDIGMALADTATNHKWGILLTVCGVVLMDFSADSADNPSHAYMMDVCGPVDQDRGLNIHALMAGLGGGFGYVVGGIHWDKTSFGRALGGQLRVIYIFTAITLSVTTVFTLVSIPERPLRPLGEKRTAMKSPSLPLPPSPPVLLEEGAGDTLPSTTATSLYASFSSPISPPSPLTPKYGSFISRDSSLTGINEFASSFGTSNIDSVLIDCFTAGHDNYLALPSSVPRQAISVSFPRAPDGFYCQERGLERREGPLTLGLDGDVLRVGSLDTSKPRASGILKRPQTLALPDVAGGNGPETSRRRNVTFSQQVANILLNGVKYESELTGSSEQSEQPLSLRRLCSTIYNMPRPVRNLCVNHFLGWLSFEGMLLFYTDFMGEVVFQGDPKAPHASEAYQKYNSGVTMGCWGMCIYAFSAAFYSAILEKLEECLSVRTLYFIAYLLFGLGTGLATLSRNLYVVLSLCTHYGILFSTLCTLPYSLLCDYYQSKKFAGSSADGTRRGMGVDISLLSCQYFLAQILVSLVLGPLTSAVGSANGVMYFASLVSFLGCLYSSLCVTYEIPSADAADEERQPLLLNV.

A run of 6 helical transmembrane segments spans residues 93–113 (ILFG…PVLL), 123–143 (SLVW…LGAW), 155–175 (RPFI…LLNG), 191–211 (WGIL…DSAD), 233–253 (IHAL…GIHW), and 268–288 (VIYI…LVSI). Thr500 bears the Phosphothreonine mark. Helical transmembrane passes span 536 to 556 (GWLS…EVVF), 576 to 596 (VTMG…YSAI), 606 to 626 (VRTL…LATL), 630 to 650 (LYVV…LCTL), 688 to 708 (FLAQ…VGSA), and 710 to 730 (GVMY…SLCV).

The protein belongs to the glycoside-pentoside-hexuronide (GPH) cation symporter transporter (TC 2.A.2) family. Predominantly expressed in brain.

It localises to the membrane. It carries out the reaction D-galactose(in) + H(+)(in) = D-galactose(out) + H(+)(out). The enzyme catalyses D-glucose(out) + H(+)(out) = D-glucose(in) + H(+)(in). In terms of biological role, proton-associated glucose transporter in the brain. The sequence is that of Proton-associated sugar transporter A from Rattus norvegicus (Rat).